The primary structure comprises 540 residues: Esterase B1 (540 aa).

A disulfide bond links Cys-68 and Cys-81. Ser-191 functions as the Acyl-ester intermediate in the catalytic mechanism. Residues Glu-324 and His-442 each act as charge relay system in the active site. Asn-452 carries N-linked (GlcNAc...) asparagine glycosylation.

This sequence belongs to the type-B carboxylesterase/lipase family.

It catalyses the reaction a carboxylic ester + H2O = an alcohol + a carboxylate + H(+). Overproduction of nonspecific esterases is a common mechanism of resistance to organophosphate insecticides. The polypeptide is Esterase B1 (B1) (Culex pipiens (House mosquito)).